The chain runs to 412 residues: Sterol-4-alpha-carboxylate 3-dehydrogenase erg26, decarboxylating (412 aa).

Residues 17–23 (GGCGFLG), 89–90 (DI), and 111–113 (TAT) contribute to the NADP(+) site. Substrate is bound by residues Ser158 and Tyr188. NADP(+)-binding positions include Tyr188, Lys192, and 217–220 (PAGI). The active-site Proton donor is Lys192.

This sequence belongs to the 3-beta-HSD family. In terms of assembly, heterotetramer of erg25, erg26, erg27 and erg28. Erg28 acts as a scaffold to tether erg27 and other 4,4-demethylation-related enzymes, forming a demethylation enzyme complex, in the endoplasmic reticulum.

It is found in the endoplasmic reticulum membrane. It participates in steroid metabolism; ergosterol biosynthesis. Functionally, sterol-C4-methyl oxidase; part of the third module of ergosterol biosynthesis pathway that includes the late steps of the pathway. Erg26 is a catalytic component of the C-4 demethylation complex that catalyzes the conversion of 4,4-dimethylfecosterol into fecosterol via 4-methylfecosterol. The third module or late pathway involves the ergosterol synthesis itself through consecutive reactions that mainly occur in the endoplasmic reticulum (ER) membrane. Firstly, the squalene synthase erg9 catalyzes the condensation of 2 farnesyl pyrophosphate moieties to form squalene, which is the precursor of all steroids. Squalene synthase is crucial for balancing the incorporation of farnesyl diphosphate (FPP) into sterol and nonsterol isoprene synthesis. Secondly, squalene is converted into lanosterol by the consecutive action of the squalene epoxidase erg1 and the lanosterol synthase erg7. Then, the delta(24)-sterol C-methyltransferase erg6 methylates lanosterol at C-24 to produce eburicol. Eburicol is the substrate of the sterol 14-alpha demethylase encoded by cyp51A and cyp51B, to yield 4,4,24-trimethyl ergosta-8,14,24(28)-trienol. The C-14 reductase erg24 then reduces the C14=C15 double bond which leads to 4,4-dimethylfecosterol. A sequence of further demethylations at C-4, involving the C-4 demethylation complex containing the C-4 methylsterol oxidases erg25A or erg25B, the sterol-4-alpha-carboxylate 3-dehydrogenase erg26 and the 3-keto-steroid reductase erg27, leads to the production of fecosterol via 4-methylfecosterol. The C-8 sterol isomerase erg2 then catalyzes the reaction which results in unsaturation at C-7 in the B ring of sterols and thus converts fecosterol to episterol. The sterol-C5-desaturase erg3B then catalyzes the introduction of a C-5 double bond in the B ring to produce 5-dehydroepisterol. The 2 other sterol-C5-desaturases, erg3A and erg3C, seem to be less important in ergosterol biosynthesis. The C-22 sterol desaturase erg5 further converts 5-dehydroepisterol into ergosta-5,7,22,24(28)-tetraen-3beta-ol by forming the C-22(23) double bond in the sterol side chain. Finally, ergosta-5,7,22,24(28)-tetraen-3beta-ol is substrate of the C-24(28) sterol reductases erg4A and erg4B to produce ergosterol. Possible alternative sterol biosynthetic pathways might exist from fecosterol to ergosterol, depending on the activities of the erg3 isoforms. This is Sterol-4-alpha-carboxylate 3-dehydrogenase erg26, decarboxylating from Aspergillus fumigatus (strain ATCC MYA-4609 / CBS 101355 / FGSC A1100 / Af293) (Neosartorya fumigata).